Here is a 216-residue protein sequence, read N- to C-terminus: Small ribosomal subunit protein uS3 (216 aa).

Residues 20-91 (LKEFFEKALV…SVEIVVEKVH (72 aa)) form the KH type-2 domain.

The protein belongs to the universal ribosomal protein uS3 family.

This is Small ribosomal subunit protein uS3 (RPS3) from Encephalitozoon cuniculi (strain GB-M1) (Microsporidian parasite).